We begin with the raw amino-acid sequence, 240 residues long: MTLATPAHKRILLKLSGEALMGDDAFGINRATIVRMVEEIAEVTRLGVQVAVVIGGGNIFRGVAGGSVGMDRATADYMGMLATVMNALALADAMDKQGLTARVMSAIGIEQVVEPYVRPKALQYLEEGKVVVFAAGTGNPFFTTDTAAALRGAEIGAEVVLKATKVDGVYTADPMKDPSATRYAKLTFDEAMSRNLGILDATAFALCRDQKLPIRVFSIVKHGALKRVVMGEDEGTLVYA.

Residue 14 to 17 (KLSG) participates in ATP binding. Glycine 56 is a binding site for UMP. 2 residues coordinate ATP: glycine 57 and arginine 61. Residues aspartate 76 and 137-144 (TGNPFFTT) each bind UMP. Residues threonine 164, tyrosine 170, and aspartate 173 each contribute to the ATP site.

The protein belongs to the UMP kinase family. As to quaternary structure, homohexamer.

The protein resides in the cytoplasm. The catalysed reaction is UMP + ATP = UDP + ADP. It participates in pyrimidine metabolism; CTP biosynthesis via de novo pathway; UDP from UMP (UMPK route): step 1/1. Its activity is regulated as follows. Inhibited by UTP. Catalyzes the reversible phosphorylation of UMP to UDP. This Acidovorax sp. (strain JS42) protein is Uridylate kinase.